The primary structure comprises 341 residues: Phosphoribosylformylglycinamidine cyclo-ligase (341 aa).

Belongs to the AIR synthase family.

The protein localises to the cytoplasm. The enzyme catalyses 2-formamido-N(1)-(5-O-phospho-beta-D-ribosyl)acetamidine + ATP = 5-amino-1-(5-phospho-beta-D-ribosyl)imidazole + ADP + phosphate + H(+). It functions in the pathway purine metabolism; IMP biosynthesis via de novo pathway; 5-amino-1-(5-phospho-D-ribosyl)imidazole from N(2)-formyl-N(1)-(5-phospho-D-ribosyl)glycinamide: step 2/2. This is Phosphoribosylformylglycinamidine cyclo-ligase from Thermosynechococcus vestitus (strain NIES-2133 / IAM M-273 / BP-1).